The chain runs to 319 residues: 7,8-didemethyl-8-hydroxy-5-deazariboflavin synthase (319 aa).

Positions 5 to 236 constitute a Radical SAM core domain; that stretch reads VTYSPAYTIV…SNITLQIPPN (232 aa). [4Fe-4S] cluster contacts are provided by cysteine 19, cysteine 23, and cysteine 26.

It belongs to the radical SAM superfamily. CofG family. In terms of assembly, consists of two subunits, CofG and CofH. [4Fe-4S] cluster is required as a cofactor.

It catalyses the reaction 5-amino-5-(4-hydroxybenzyl)-6-(D-ribitylimino)-5,6-dihydrouracil + S-adenosyl-L-methionine = 7,8-didemethyl-8-hydroxy-5-deazariboflavin + 5'-deoxyadenosine + L-methionine + NH4(+) + H(+). Its pathway is cofactor biosynthesis; coenzyme F0 biosynthesis. Its function is as follows. Catalyzes the radical-mediated synthesis of 7,8-didemethyl-8-hydroxy-5-deazariboflavin from 5-amino-5-(4-hydroxybenzyl)-6-(D-ribitylimino)-5,6-dihydrouracil. This chain is 7,8-didemethyl-8-hydroxy-5-deazariboflavin synthase, found in Trichodesmium erythraeum (strain IMS101).